The primary structure comprises 211 residues: 1-deoxy-D-xylulose 5-phosphate reductoisomerase (211 aa).

Asp14 is a Mn(2+) binding site. Residues Ser15, Glu16, Ser40, His63, Ser76, Asn81, Lys82, and Glu85 each contribute to the 1-deoxy-D-xylulose 5-phosphate site. Glu16 contacts Mn(2+). Mn(2+) is bound at residue Glu85.

This sequence belongs to the DXR family. The cofactor is Mn(2+). Mg(2+) serves as cofactor. In terms of tissue distribution, mostly expressed in flowers and, to a lower extent, in leaves.

The protein resides in the plastid. It localises to the chloroplast stroma. The enzyme catalyses 2-C-methyl-D-erythritol 4-phosphate + NADP(+) = 1-deoxy-D-xylulose 5-phosphate + NADPH + H(+). It functions in the pathway isoprenoid biosynthesis; isopentenyl diphosphate biosynthesis via DXP pathway; isopentenyl diphosphate from 1-deoxy-D-xylulose 5-phosphate: step 1/6. Its function is as follows. Enzyme of the plastid non-mevalonate pathway for isoprenoid biosynthesis that catalyzes the NADPH-dependent rearrangement and reduction of 1-deoxy-D-xylulose-5-phosphate (DXP) to 2-C-methyl-D-erythritol 4-phosphate (MEP). Required for chloroplast development. The chain is 1-deoxy-D-xylulose 5-phosphate reductoisomerase from Thymus vulgaris (Thyme).